The chain runs to 245 residues: MLIIPAIDLKDGKCVRLRQGRMEDSTVFGDDPVDMATKWVDAGARRLHLVDLNGAFAGEPVNGEIVKAIAVKYPNLPIQIGGGIRSAETIEAYLKAGVQWVIIGTKAVKEPEFVTEMCKEFPGHIIVGLDAKDGRVATDGWAEVSEVMAVDLAKRFANDGVSSIVYTDIARDGMMQGVNVEATAKLAEEGGIPVIASGGVTNMDDLKRLATVADTGVIGAITGRAIYEGTLDVAEAQAYCDSLKN.

Catalysis depends on Asp8, which acts as the Proton acceptor. Asp130 functions as the Proton donor in the catalytic mechanism.

This sequence belongs to the HisA/HisF family.

Its subcellular location is the cytoplasm. It carries out the reaction 1-(5-phospho-beta-D-ribosyl)-5-[(5-phospho-beta-D-ribosylamino)methylideneamino]imidazole-4-carboxamide = 5-[(5-phospho-1-deoxy-D-ribulos-1-ylimino)methylamino]-1-(5-phospho-beta-D-ribosyl)imidazole-4-carboxamide. The protein operates within amino-acid biosynthesis; L-histidine biosynthesis; L-histidine from 5-phospho-alpha-D-ribose 1-diphosphate: step 4/9. The polypeptide is 1-(5-phosphoribosyl)-5-[(5-phosphoribosylamino)methylideneamino] imidazole-4-carboxamide isomerase (Marinobacter nauticus (strain ATCC 700491 / DSM 11845 / VT8) (Marinobacter aquaeolei)).